A 245-amino-acid chain; its full sequence is MAVRASFENNCEVGCFAKLTNTYCLVAIGGSENFYSVFEGELSDTIPVVHASIAGCRIIGRMCVGNRHGLLVPNNTTDQELQHIRNSLPDSVQIRRVEERLSALGNVTTCNDYVALVHPDLDRETEEILADVLKVEVFRQTVADQVLVGSYCVFSNQGGLVHPKTSIEDQDELSSLLQVPLVAGTVNRGSEVIAAGMVVNDWCAFCGLDTTSTELSVVESVFKLNEAKPSTIATSMRDSLIDSLT.

Position 113 is a phosphotyrosine (Tyr-113). Thr-165 bears the Phosphothreonine mark. At Ser-166 the chain carries Phosphoserine. A phosphoserine; by CK1 mark is found at Ser-174 and Ser-175. Phosphoserine; by PKC is present on Ser-235. A phosphoserine mark is found at Ser-239 and Ser-243.

It belongs to the eIF-6 family. Monomer. Associates with the 60S ribosomal subunit. Interacts with RACK1. Interacts with DICER1, AGO2, TARBP2, MOV10 and RPL7A; they form a large RNA-induced silencing complex (RISC). Phosphorylation at Ser-174 and Ser-175 by CSNK1D/CK1 promotes nuclear export. Post-translationally, ufmylated by UFL1.

The protein localises to the cytoplasm. Its subcellular location is the nucleus. It localises to the nucleolus. Its function is as follows. Binds to the 60S ribosomal subunit and prevents its association with the 40S ribosomal subunit to form the 80S initiation complex in the cytoplasm. Behaves as a stimulatory translation initiation factor downstream insulin/growth factors. Is also involved in ribosome biogenesis. Associates with pre-60S subunits in the nucleus and is involved in its nuclear export. Cytoplasmic release of TIF6 from 60S subunits and nuclear relocalization is promoted by a RACK1 (RACK1)-dependent protein kinase C activity. In tissues responsive to insulin, controls fatty acid synthesis and glycolysis by exerting translational control of adipogenic transcription factors such as CEBPB, CEBPD and ATF4 that have G/C rich or uORF in their 5'UTR. Required for ROS-dependent megakaryocyte maturation and platelets formation, controls the expression of mitochondrial respiratory chain genes involved in reactive oxygen species (ROS) synthesis. Involved in miRNA-mediated gene silencing by the RNA-induced silencing complex (RISC). Required for both miRNA-mediated translational repression and miRNA-mediated cleavage of complementary mRNAs by RISC. Modulates cell cycle progression and global translation of pre-B cells, its activation seems to be rate-limiting in tumorigenesis and tumor growth. This is Eukaryotic translation initiation factor 6 (Eif6) from Rattus norvegicus (Rat).